Consider the following 146-residue polypeptide: Aspartate 1-decarboxylase (146 aa).

The active-site Schiff-base intermediate with substrate; via pyruvic acid is Ser25. Ser25 is modified (pyruvic acid (Ser)). Residue Thr57 coordinates substrate. Tyr58 serves as the catalytic Proton donor. Substrate is bound at residue 73-75 (GPA).

Belongs to the PanD family. As to quaternary structure, heterooctamer of four alpha and four beta subunits. Pyruvate serves as cofactor. Post-translationally, is synthesized initially as an inactive proenzyme, which is activated by self-cleavage at a specific serine bond to produce a beta-subunit with a hydroxyl group at its C-terminus and an alpha-subunit with a pyruvoyl group at its N-terminus.

The protein resides in the cytoplasm. The enzyme catalyses L-aspartate + H(+) = beta-alanine + CO2. It functions in the pathway cofactor biosynthesis; (R)-pantothenate biosynthesis; beta-alanine from L-aspartate: step 1/1. Catalyzes the pyruvoyl-dependent decarboxylation of aspartate to produce beta-alanine. This chain is Aspartate 1-decarboxylase, found in Salinibacter ruber (strain DSM 13855 / M31).